Consider the following 230-residue polypeptide: Uracil-DNA glycosylase (230 aa).

Asp-70 serves as the catalytic Proton acceptor.

It belongs to the uracil-DNA glycosylase (UDG) superfamily. UNG family.

The protein localises to the cytoplasm. The enzyme catalyses Hydrolyzes single-stranded DNA or mismatched double-stranded DNA and polynucleotides, releasing free uracil.. Excises uracil residues from the DNA which can arise as a result of misincorporation of dUMP residues by DNA polymerase or due to deamination of cytosine. This Pseudomonas entomophila (strain L48) protein is Uracil-DNA glycosylase.